The chain runs to 439 residues: ATP-dependent RNA helicase RhlB (439 aa).

A Q motif motif is present at residues 9 to 37 (QKFADLPLHPEVKQALAENGFEFCTPIQA). The 180-residue stretch at 40 to 219 (LPVLLQSKDI…YDHMNEPVKV (180 aa)) folds into the Helicase ATP-binding domain. 53–60 (AQTGTGKT) lines the ATP pocket. The short motif at 165–168 (DEAD) is the DEAD box element. Positions 243 to 390 (KMRLLLTLIE…VSNYDRDALL (148 aa)) constitute a Helicase C-terminal domain. The tract at residues 395–439 (PPVKIHRRHPAGARNLRERSGAGRPQGAHRSGGRPPRHDRTRRQP) is disordered. Residues 425–439 (SGGRPPRHDRTRRQP) show a composition bias toward basic residues.

It belongs to the DEAD box helicase family. RhlB subfamily. Component of the RNA degradosome, which is a multiprotein complex involved in RNA processing and mRNA degradation.

The protein localises to the cytoplasm. The enzyme catalyses ATP + H2O = ADP + phosphate + H(+). DEAD-box RNA helicase involved in RNA degradation. Has RNA-dependent ATPase activity and unwinds double-stranded RNA. This Shewanella sp. (strain ANA-3) protein is ATP-dependent RNA helicase RhlB.